The following is a 321-amino-acid chain: tRNA 2-thiolation protein NcsA (321 aa).

A Glycyl lysine isopeptide (Lys-Gly) (interchain with G-Cter in SAMP2) cross-link involves residue K204.

The protein belongs to the TtcA family. CTU1/NCS6/ATPBD3 subfamily. In terms of assembly, interacts with monomeric and polymeric forms of SAMP2. Interacts with UbaA. Interacts with archaeal EF-1-alpha and Pan1. Non-sampylated protein forms a complex with archaeal CPSF1 of approximately 100 kDa. In terms of processing, sampylated at Lys-204 with the archaeal ubiquitin-like protein SAMP2. Polymeric chains of SAMP2 are also linked.

It participates in tRNA modification; 5-methoxycarbonylmethyl-2-thiouridine-tRNA biosynthesis. Functionally, required for thiolation of mcm(5)S(2)U at the wobble uridine position of tRNA specific for lysine (tRNA(Lys)). Probably acts by catalyzing adenylation of tRNA, an intermediate required for 2-thiolation. May also act as a sulfurtransferase that transfers sulfur from thiocarboxylated SAMP2 onto the uridine of tRNA at wobble position. Required for cell growth at elevated temperatures. The protein is tRNA 2-thiolation protein NcsA of Haloferax volcanii (strain ATCC 29605 / DSM 3757 / JCM 8879 / NBRC 14742 / NCIMB 2012 / VKM B-1768 / DS2) (Halobacterium volcanii).